The chain runs to 540 residues: Berberine bridge enzyme-like 16 (540 aa).

A signal peptide spans 1–24; it reads MKFWSRPLTFLIIIIYLIIQQVNS. Cysteines 38 and 101 form a disulfide. Residue Asn-59 is glycosylated (N-linked (GlcNAc...) asparagine). In terms of domain architecture, FAD-binding PCMH-type spans 79–254; it reads STRKPEVIVA…LAWKIKLVRV (176 aa). The 6-(S-cysteinyl)-8alpha-(pros-histidyl)-FAD (His-Cys) cross-link spans 116-178; it reads HDYEGFSYTS…KVHAFPAGVC (63 aa). 2 N-linked (GlcNAc...) asparagine glycosylation sites follow: Asn-325 and Asn-496.

It belongs to the oxygen-dependent FAD-linked oxidoreductase family. FAD serves as cofactor. The FAD cofactor is bound via a bicovalent 6-S-cysteinyl, 8alpha-N1-histidyl FAD linkage.

It is found in the secreted. It localises to the cell wall. This is Berberine bridge enzyme-like 16 from Arabidopsis thaliana (Mouse-ear cress).